Consider the following 444-residue polypeptide: Na(+)-translocating NADH-quinone reductase subunit A (444 aa).

The protein belongs to the NqrA family. In terms of assembly, composed of six subunits; NqrA, NqrB, NqrC, NqrD, NqrE and NqrF.

The catalysed reaction is a ubiquinone + n Na(+)(in) + NADH + H(+) = a ubiquinol + n Na(+)(out) + NAD(+). Functionally, NQR complex catalyzes the reduction of ubiquinone-1 to ubiquinol by two successive reactions, coupled with the transport of Na(+) ions from the cytoplasm to the periplasm. NqrA to NqrE are probably involved in the second step, the conversion of ubisemiquinone to ubiquinol. In Shewanella frigidimarina (strain NCIMB 400), this protein is Na(+)-translocating NADH-quinone reductase subunit A.